The sequence spans 602 residues: Elongation factor 4 (602 aa).

Residues 7–189 enclose the tr-type G domain; sequence NNIRNFSIIA…RILTAVPPPQ (183 aa). Residues 19 to 24 and 136 to 139 contribute to the GTP site; these read DHGKST and NKID.

Belongs to the TRAFAC class translation factor GTPase superfamily. Classic translation factor GTPase family. LepA subfamily.

The protein resides in the cell inner membrane. It catalyses the reaction GTP + H2O = GDP + phosphate + H(+). Its function is as follows. Required for accurate and efficient protein synthesis under certain stress conditions. May act as a fidelity factor of the translation reaction, by catalyzing a one-codon backward translocation of tRNAs on improperly translocated ribosomes. Back-translocation proceeds from a post-translocation (POST) complex to a pre-translocation (PRE) complex, thus giving elongation factor G a second chance to translocate the tRNAs correctly. Binds to ribosomes in a GTP-dependent manner. This is Elongation factor 4 from Protochlamydia amoebophila (strain UWE25).